An 837-amino-acid polypeptide reads, in one-letter code: Phenylalanine--tRNA ligase beta subunit (837 aa).

In terms of domain architecture, tRNA-binding spans 39-149 (SASLEGIVTG…EMNIAIPKIG (111 aa)). Residues 415–520 (IEEQLLLLRR…RLIGYDRFDS (106 aa)) form the B5 domain. Asp498, Asp504, Glu507, and Glu508 together coordinate Mg(2+). Residues 743–836 (PTVPSMERDI…LKVEFSAELR (94 aa)) form the FDX-ACB domain.

The protein belongs to the phenylalanyl-tRNA synthetase beta subunit family. Type 1 subfamily. In terms of assembly, tetramer of two alpha and two beta subunits. Mg(2+) is required as a cofactor.

It localises to the cytoplasm. The catalysed reaction is tRNA(Phe) + L-phenylalanine + ATP = L-phenylalanyl-tRNA(Phe) + AMP + diphosphate + H(+). The sequence is that of Phenylalanine--tRNA ligase beta subunit from Prochlorococcus marinus (strain SARG / CCMP1375 / SS120).